Reading from the N-terminus, the 132-residue chain is Small ribosomal subunit protein uS9 (132 aa).

This sequence belongs to the universal ribosomal protein uS9 family.

The protein is Small ribosomal subunit protein uS9 (rpsI) of Mycoplasma genitalium (strain ATCC 33530 / DSM 19775 / NCTC 10195 / G37) (Mycoplasmoides genitalium).